A 377-amino-acid chain; its full sequence is Queuine tRNA-ribosyltransferase (377 aa).

Residue aspartate 89 is the Proton acceptor of the active site. Residues 89-93 (DSGGF), aspartate 143, glutamine 188, and glycine 215 contribute to the substrate site. The RNA binding stretch occupies residues 246–252 (GVGKPED). Aspartate 265 (nucleophile) is an active-site residue. The tract at residues 270–274 (TRNAR) is RNA binding; important for wobble base 34 recognition. Zn(2+)-binding residues include cysteine 303, cysteine 305, cysteine 308, and histidine 334.

The protein belongs to the queuine tRNA-ribosyltransferase family. Homodimer. Within each dimer, one monomer is responsible for RNA recognition and catalysis, while the other monomer binds to the replacement base PreQ1. It depends on Zn(2+) as a cofactor.

It carries out the reaction 7-aminomethyl-7-carbaguanine + guanosine(34) in tRNA = 7-aminomethyl-7-carbaguanosine(34) in tRNA + guanine. It participates in tRNA modification; tRNA-queuosine biosynthesis. Its function is as follows. Catalyzes the base-exchange of a guanine (G) residue with the queuine precursor 7-aminomethyl-7-deazaguanine (PreQ1) at position 34 (anticodon wobble position) in tRNAs with GU(N) anticodons (tRNA-Asp, -Asn, -His and -Tyr). Catalysis occurs through a double-displacement mechanism. The nucleophile active site attacks the C1' of nucleotide 34 to detach the guanine base from the RNA, forming a covalent enzyme-RNA intermediate. The proton acceptor active site deprotonates the incoming PreQ1, allowing a nucleophilic attack on the C1' of the ribose to form the product. After dissociation, two additional enzymatic reactions on the tRNA convert PreQ1 to queuine (Q), resulting in the hypermodified nucleoside queuosine (7-(((4,5-cis-dihydroxy-2-cyclopenten-1-yl)amino)methyl)-7-deazaguanosine). In Acinetobacter baumannii (strain ACICU), this protein is Queuine tRNA-ribosyltransferase.